A 120-amino-acid chain; its full sequence is Small ribosomal subunit protein uS11 (120 aa).

Belongs to the universal ribosomal protein uS11 family. Part of the 30S ribosomal subunit. Interacts with proteins S7 and S18. Binds to IF-3.

Functionally, located on the platform of the 30S subunit, it bridges several disparate RNA helices of the 16S rRNA. Forms part of the Shine-Dalgarno cleft in the 70S ribosome. This chain is Small ribosomal subunit protein uS11, found in Neorickettsia sennetsu (strain ATCC VR-367 / Miyayama) (Ehrlichia sennetsu).